Reading from the N-terminus, the 305-residue chain is Methionyl-tRNA formyltransferase (305 aa).

110 to 113 (SLLP) contributes to the (6S)-5,6,7,8-tetrahydrofolate binding site.

This sequence belongs to the Fmt family.

It catalyses the reaction L-methionyl-tRNA(fMet) + (6R)-10-formyltetrahydrofolate = N-formyl-L-methionyl-tRNA(fMet) + (6S)-5,6,7,8-tetrahydrofolate + H(+). In terms of biological role, attaches a formyl group to the free amino group of methionyl-tRNA(fMet). The formyl group appears to play a dual role in the initiator identity of N-formylmethionyl-tRNA by promoting its recognition by IF2 and preventing the misappropriation of this tRNA by the elongation apparatus. This is Methionyl-tRNA formyltransferase from Ureaplasma parvum serovar 3 (strain ATCC 700970).